The sequence spans 29 residues: Cytochrome b6-f complex subunit 8 (29 aa).

The chain crosses the membrane as a helical span at residues 3–23 (TVSIAWAALMVIFTFSISLVV).

Belongs to the PetN family. As to quaternary structure, the 4 large subunits of the cytochrome b6-f complex are cytochrome b6, subunit IV (17 kDa polypeptide, PetD), cytochrome f and the Rieske protein, while the 4 small subunits are PetG, PetL, PetM and PetN. The complex functions as a dimer.

The protein localises to the plastid. Its subcellular location is the chloroplast thylakoid membrane. Component of the cytochrome b6-f complex, which mediates electron transfer between photosystem II (PSII) and photosystem I (PSI), cyclic electron flow around PSI, and state transitions. The protein is Cytochrome b6-f complex subunit 8 of Psilotum nudum (Whisk fern).